A 61-amino-acid chain; its full sequence is Small ribosomal subunit protein uS14 (61 aa).

C24, C27, C40, and C43 together coordinate Zn(2+).

The protein belongs to the universal ribosomal protein uS14 family. Zinc-binding uS14 subfamily. In terms of assembly, part of the 30S ribosomal subunit. Contacts proteins S3 and S10. The cofactor is Zn(2+).

In terms of biological role, binds 16S rRNA, required for the assembly of 30S particles and may also be responsible for determining the conformation of the 16S rRNA at the A site. The polypeptide is Small ribosomal subunit protein uS14 (Elusimicrobium minutum (strain Pei191)).